An 85-amino-acid chain; its full sequence is MAHKKGASSSRNGRDSNAQRLGVKRFGGQVVLAGEIIVRQRGTHFHPGAGVGRGGDDTLFALVPGAVEFGTRRGRKVINIVAAGE.

Residues 1–20 (MAHKKGASSSRNGRDSNAQR) are disordered. The span at 7 to 19 (ASSSRNGRDSNAQ) shows a compositional bias: polar residues.

It belongs to the bacterial ribosomal protein bL27 family.

The polypeptide is Large ribosomal subunit protein bL27 (Kineococcus radiotolerans (strain ATCC BAA-149 / DSM 14245 / SRS30216)).